A 289-amino-acid polypeptide reads, in one-letter code: Probable early E4 33 kDa protein (289 aa).

This sequence belongs to the adenoviridae E4 30 to 34 kDa protein family. As to quaternary structure, interacts with E1B-55k.

The protein localises to the host nucleus. Its subcellular location is the host cytoplasm. Functionally, plays a major role to prevent cellular inhibition of viral genome replication by nuclear bodies. Assembles an SCF-like E3 ubiquitin ligase complex based on the cellular proteins ELOB, ELOC, CUL5 and RBX1, in cooperation with viral E1B-55K. This viral RING-type ligase ubiquitinates cellular substrates prior to proteasomal degradation: p53/TP53, LIG4, MRE11-RAD50-NBS1 (MRN) complex, ITGA3, DAXX and BLM. The polypeptide is Probable early E4 33 kDa protein (Mus musculus (Mouse)).